The sequence spans 159 residues: Small ribosomal subunit protein uS17 (159 aa).

This sequence belongs to the universal ribosomal protein uS17 family.

The protein resides in the cytoplasm. The chain is Small ribosomal subunit protein uS17 (RPS11) from Zea mays (Maize).